Here is a 311-residue protein sequence, read N- to C-terminus: 4-hydroxy-3-methylbut-2-enyl diphosphate reductase (311 aa).

Cys-14 provides a ligand contact to [4Fe-4S] cluster. Residues His-43 and His-76 each contribute to the (2E)-4-hydroxy-3-methylbut-2-enyl diphosphate site. Positions 43 and 76 each coordinate dimethylallyl diphosphate. Residues His-43 and His-76 each contribute to the isopentenyl diphosphate site. Cys-98 serves as a coordination point for [4Fe-4S] cluster. His-126 is a binding site for (2E)-4-hydroxy-3-methylbut-2-enyl diphosphate. His-126 contributes to the dimethylallyl diphosphate binding site. His-126 contacts isopentenyl diphosphate. The Proton donor role is filled by Glu-128. Thr-166 contributes to the (2E)-4-hydroxy-3-methylbut-2-enyl diphosphate binding site. Cys-196 provides a ligand contact to [4Fe-4S] cluster. 4 residues coordinate (2E)-4-hydroxy-3-methylbut-2-enyl diphosphate: Ser-224, Ser-225, Asn-226, and Ser-268. Residues Ser-224, Ser-225, Asn-226, and Ser-268 each contribute to the dimethylallyl diphosphate site. Residues Ser-224, Ser-225, Asn-226, and Ser-268 each coordinate isopentenyl diphosphate.

Belongs to the IspH family. [4Fe-4S] cluster serves as cofactor.

The enzyme catalyses isopentenyl diphosphate + 2 oxidized [2Fe-2S]-[ferredoxin] + H2O = (2E)-4-hydroxy-3-methylbut-2-enyl diphosphate + 2 reduced [2Fe-2S]-[ferredoxin] + 2 H(+). The catalysed reaction is dimethylallyl diphosphate + 2 oxidized [2Fe-2S]-[ferredoxin] + H2O = (2E)-4-hydroxy-3-methylbut-2-enyl diphosphate + 2 reduced [2Fe-2S]-[ferredoxin] + 2 H(+). Its pathway is isoprenoid biosynthesis; dimethylallyl diphosphate biosynthesis; dimethylallyl diphosphate from (2E)-4-hydroxy-3-methylbutenyl diphosphate: step 1/1. It functions in the pathway isoprenoid biosynthesis; isopentenyl diphosphate biosynthesis via DXP pathway; isopentenyl diphosphate from 1-deoxy-D-xylulose 5-phosphate: step 6/6. Catalyzes the conversion of 1-hydroxy-2-methyl-2-(E)-butenyl 4-diphosphate (HMBPP) into a mixture of isopentenyl diphosphate (IPP) and dimethylallyl diphosphate (DMAPP). Acts in the terminal step of the DOXP/MEP pathway for isoprenoid precursor biosynthesis. The chain is 4-hydroxy-3-methylbut-2-enyl diphosphate reductase from Chromobacterium violaceum (strain ATCC 12472 / DSM 30191 / JCM 1249 / CCUG 213 / NBRC 12614 / NCIMB 9131 / NCTC 9757 / MK).